Reading from the N-terminus, the 266-residue chain is Anamorsin homolog (266 aa).

An N-terminal SAM-like domain region spans residues 1 to 164; the sequence is MIINFVGNTL…NITAENPDFL (164 aa). The segment at 165-185 is linker; that stretch reads SNEDNDVSSDDEDLYNNEDDK. [4Fe-4S] cluster-binding residues include Cys229, Cys232, Cys240, and Cys243. Short sequence motifs (cx2C motif) lie at residues 229 to 232 and 240 to 243; these read CGNC and CASC. The segment at 229 to 243 is fe-S binding site B; that stretch reads CGNCYLGDAFRCASC.

This sequence belongs to the anamorsin family. Monomer. The cofactor is [4Fe-4S] cluster.

It localises to the cytoplasm. The protein localises to the mitochondrion intermembrane space. Functionally, component of the cytosolic iron-sulfur (Fe-S) protein assembly (CIA) machinery. Required for the maturation of extramitochondrial Fe-S proteins. Part of an electron transfer chain functioning in an early step of cytosolic Fe-S biogenesis, facilitating the de novo assembly of a [4Fe-4S] cluster on the cytosolic Fe-S scaffold complex. Electrons are transferred from NADPH via a FAD- and FMN-containing diflavin oxidoreductase. Together with the diflavin oxidoreductase, also required for the assembly of the diferric tyrosyl radical cofactor of ribonucleotide reductase (RNR), probably by providing electrons for reduction during radical cofactor maturation in the catalytic small subunit. In Plasmodium falciparum (isolate 3D7), this protein is Anamorsin homolog.